The primary structure comprises 196 residues: O-methyltransferase dpmpI (196 aa).

Residues 127-128 (GG), Asp152, and 174-175 (SF) contribute to the S-adenosyl-L-methionine site. The tract at residues 166–196 (NGIEAVPHSFEDPQPIKSKSPRLDNLARERL) is disordered. Residues 186–196 (PRLDNLARERL) show a composition bias toward basic and acidic residues.

It belongs to the class I-like SAM-binding methyltransferase superfamily. Cation-independent O-methyltransferase family.

Its pathway is secondary metabolite biosynthesis; terpenoid biosynthesis. Its function is as follows. O-methyltransferase; part of the gene cluster that mediates the biosynthesis of diterpenoid pyrones. The first step of the pathway is the synthesis of the alpha-pyrone moiety by the polyketide synthase dpmpA via condensation of one acetyl-CoA starter unit with 3 malonyl-CoA units and 2 methylations. The alpha-pyrone is then combined with geranylgeranyl pyrophosphate (GGPP) formed by the GGPP synthase dpmpD through the action of the prenyltransferase dpmpC to yield a linear alpha-pyrone diterpenoid. Subsequent steps in the diterpenoid pyrone biosynthetic pathway involve the decalin core formation, which is initiated by the epoxidation of the C10-C11 olefin by the FAD-dependent oxidoreductase dpmpE, and is followed by a cyclization cascade catalyzed by the terpene cyclase dpmpB. The short chain dehydrogenase/reductase dpmpG then oxidizes the 8S hydroxy group to a ketone and the short chain dehydrogenase/reductase dpmpH reduces the ketone to the 8R hydroxy group to yield higginsianin B. Higginsianin B is further methylated by the methyltransferase dpmpI to produce the intermediate named FDDP B. The cytochrome P450 monooxygenase dpmpJ then oxidizes the C-26 methyl to primary alcohol, producing the final diterpenoid pyrone with a C-26 primary alcohol on the gamma-pyrone moiety named FDDP C. In Macrophomina phaseolina (strain MS6) (Charcoal rot fungus), this protein is O-methyltransferase dpmpI.